The sequence spans 314 residues: L-lactate dehydrogenase 1 (314 aa).

NAD(+) is bound by residues V16, D37, K42, Y68, and 82-83; that span reads GL. Substrate is bound by residues Q85, R91, and 123-126; that span reads NPVD. NAD(+) is bound by residues 121–123 and S146; that span reads ATN. Position 151–154 (151–154) interacts with substrate; that stretch reads DSAR. The beta-D-fructose 1,6-bisphosphate site is built by R156 and H171. Catalysis depends on H178, which acts as the Proton acceptor. The residue at position 223 (Y223) is a Phosphotyrosine. T232 lines the substrate pocket.

This sequence belongs to the LDH/MDH superfamily. LDH family. As to quaternary structure, homotetramer.

The protein localises to the cytoplasm. The catalysed reaction is (S)-lactate + NAD(+) = pyruvate + NADH + H(+). Its pathway is fermentation; pyruvate fermentation to lactate; (S)-lactate from pyruvate: step 1/1. Allosterically activated by fructose 1,6-bisphosphate (FBP). Catalyzes the conversion of lactate to pyruvate. The polypeptide is L-lactate dehydrogenase 1 (Bacillus anthracis).